We begin with the raw amino-acid sequence, 906 residues long: Protein translocase subunit SecA (906 aa).

ATP contacts are provided by residues glutamine 89, 107–111 (GEGKT), and aspartate 502. The segment at 829–898 (EAPPEPELPP…ACPCGSGKKY (70 aa)) is disordered. Residues 858–877 (WSDHQHDERNVPAAERDPAD) are compositionally biased toward basic and acidic residues. Zn(2+) is bound by residues cysteine 890, cysteine 892, cysteine 901, and histidine 902.

This sequence belongs to the SecA family. Monomer and homodimer. Part of the essential Sec protein translocation apparatus which comprises SecA, SecYEG and auxiliary proteins SecDF-YajC and YidC. Zn(2+) serves as cofactor.

Its subcellular location is the cell inner membrane. It is found in the cytoplasm. It catalyses the reaction ATP + H2O + cellular proteinSide 1 = ADP + phosphate + cellular proteinSide 2.. Its function is as follows. Part of the Sec protein translocase complex. Interacts with the SecYEG preprotein conducting channel. Has a central role in coupling the hydrolysis of ATP to the transfer of proteins into and across the cell membrane, serving both as a receptor for the preprotein-SecB complex and as an ATP-driven molecular motor driving the stepwise translocation of polypeptide chains across the membrane. The chain is Protein translocase subunit SecA from Brucella anthropi (strain ATCC 49188 / DSM 6882 / CCUG 24695 / JCM 21032 / LMG 3331 / NBRC 15819 / NCTC 12168 / Alc 37) (Ochrobactrum anthropi).